The chain runs to 119 residues: UPF0145 protein Ta0182 (119 aa).

Belongs to the UPF0145 family.

The protein is UPF0145 protein Ta0182 of Thermoplasma acidophilum (strain ATCC 25905 / DSM 1728 / JCM 9062 / NBRC 15155 / AMRC-C165).